Consider the following 170-residue polypeptide: NADH-quinone oxidoreductase subunit B (170 aa).

Residues cysteine 37, cysteine 38, cysteine 102, and cysteine 131 each coordinate [4Fe-4S] cluster.

It belongs to the complex I 20 kDa subunit family. NDH-1 is composed of 14 different subunits. Subunits NuoB, C, D, E, F, and G constitute the peripheral sector of the complex. [4Fe-4S] cluster is required as a cofactor.

The protein localises to the cell inner membrane. It catalyses the reaction a quinone + NADH + 5 H(+)(in) = a quinol + NAD(+) + 4 H(+)(out). In terms of biological role, NDH-1 shuttles electrons from NADH, via FMN and iron-sulfur (Fe-S) centers, to quinones in the respiratory chain. The immediate electron acceptor for the enzyme in this species is believed to be ubiquinone. Couples the redox reaction to proton translocation (for every two electrons transferred, four hydrogen ions are translocated across the cytoplasmic membrane), and thus conserves the redox energy in a proton gradient. The protein is NADH-quinone oxidoreductase subunit B of Geobacter sulfurreducens (strain ATCC 51573 / DSM 12127 / PCA).